The sequence spans 159 residues: Endoribonuclease YbeY (159 aa).

Residues histidine 119, histidine 123, and histidine 129 each contribute to the Zn(2+) site.

Belongs to the endoribonuclease YbeY family. Zn(2+) is required as a cofactor.

It is found in the cytoplasm. Its function is as follows. Single strand-specific metallo-endoribonuclease involved in late-stage 70S ribosome quality control and in maturation of the 3' terminus of the 16S rRNA. This Acinetobacter baylyi (strain ATCC 33305 / BD413 / ADP1) protein is Endoribonuclease YbeY.